Here is a 204-residue protein sequence, read N- to C-terminus: NAD(P)H dehydrogenase (quinone) FQR1 (204 aa).

Positions V5–I192 constitute a Flavodoxin-like domain. FMN-binding positions include S11 to H15, I112 to G165, and H136. Residue Y13 participates in NAD(+) binding.

It belongs to the WrbA family. FMN is required as a cofactor.

The protein resides in the cell membrane. It carries out the reaction a quinone + NADH + H(+) = a quinol + NAD(+). The enzyme catalyses a quinone + NADPH + H(+) = a quinol + NADP(+). In terms of biological role, catalyzes the transfer of electrons from NADH and NADPH to several quinones in vitro. May act as detoxification enzyme, and protect against auxin-induced oxidative stress. This chain is NAD(P)H dehydrogenase (quinone) FQR1, found in Arabidopsis thaliana (Mouse-ear cress).